Consider the following 186-residue polypeptide: MSVADVKKGVEQKMQRSIEAFKNDLAKIRTGRAHTGLLDHVQVDYYGSMVPISQVANLTLVDARTIGVQPWEKNMVAKVEKAIREADLGLNPATTGDLIRVPMPALTEERRRELTKVVKSEGETAKVAIRNLRRDANEALKKLVKDKEISEDDERRASDDVQKLTDKHVAEIDKLVQTKEAEIMTV.

This sequence belongs to the RRF family.

It localises to the cytoplasm. In terms of biological role, responsible for the release of ribosomes from messenger RNA at the termination of protein biosynthesis. May increase the efficiency of translation by recycling ribosomes from one round of translation to another. In Burkholderia cenocepacia (strain HI2424), this protein is Ribosome-recycling factor.